Here is a 358-residue protein sequence, read N- to C-terminus: Methylthioribose-1-phosphate isomerase (358 aa).

Substrate-binding positions include 54–56, arginine 96, and glutamine 205; that span reads RGA. Residue aspartate 246 is the Proton donor of the active site. 256–257 is a binding site for substrate; it reads NK.

This sequence belongs to the eIF-2B alpha/beta/delta subunits family. MtnA subfamily.

The catalysed reaction is 5-(methylsulfanyl)-alpha-D-ribose 1-phosphate = 5-(methylsulfanyl)-D-ribulose 1-phosphate. It functions in the pathway amino-acid biosynthesis; L-methionine biosynthesis via salvage pathway; L-methionine from S-methyl-5-thio-alpha-D-ribose 1-phosphate: step 1/6. Catalyzes the interconversion of methylthioribose-1-phosphate (MTR-1-P) into methylthioribulose-1-phosphate (MTRu-1-P). The sequence is that of Methylthioribose-1-phosphate isomerase from Azotobacter vinelandii (strain DJ / ATCC BAA-1303).